A 473-amino-acid chain; its full sequence is MNFETTIGLEVHIELKTHSKIFSPSPVAYGADPNANTNVIDWGYPGVLPTTNKGVVADGIIAALALHATVEQHTHFDRKNYFYPDNPKAYQITQSDKPIGHDGWVEIDVDGVKKKIGIAEMHIEEDAGKNTHERDYSYVDLNRQGTPLIEIVSKPDIASPAEAYAYLEALRQRIQFTGISDVKMEEGSMRVDVNISVRPVGQQKFGTKTELKNLNSFNYVQRGLEYEEKRQQQVLMSGGAVQQETRRFDEKTGETILMRVKAGADDYRYFPEPDLPALNISDDWIKELDAAMPEMPGKRRERYVNELGLTDYDAMVITQTKEMSDFFNATVALKADPKMAANYLQGDVNAYLNDKQVDLQATKLTPEHLAGMINLITDGTISSKMAKKVFKAITEGEDPKAFVEANGLVQLSDPAKLQPIIDDVLSANPQSIEDFNNGKKRAVGFLVGQIMKQTHGQANPQVVNKLLMAALQQ.

Belongs to the GatB/GatE family. GatB subfamily. Heterotrimer of A, B and C subunits.

The catalysed reaction is L-glutamyl-tRNA(Gln) + L-glutamine + ATP + H2O = L-glutaminyl-tRNA(Gln) + L-glutamate + ADP + phosphate + H(+). It catalyses the reaction L-aspartyl-tRNA(Asn) + L-glutamine + ATP + H2O = L-asparaginyl-tRNA(Asn) + L-glutamate + ADP + phosphate + 2 H(+). Allows the formation of correctly charged Asn-tRNA(Asn) or Gln-tRNA(Gln) through the transamidation of misacylated Asp-tRNA(Asn) or Glu-tRNA(Gln) in organisms which lack either or both of asparaginyl-tRNA or glutaminyl-tRNA synthetases. The reaction takes place in the presence of glutamine and ATP through an activated phospho-Asp-tRNA(Asn) or phospho-Glu-tRNA(Gln). The protein is Aspartyl/glutamyl-tRNA(Asn/Gln) amidotransferase subunit B of Levilactobacillus brevis (strain ATCC 367 / BCRC 12310 / CIP 105137 / JCM 1170 / LMG 11437 / NCIMB 947 / NCTC 947) (Lactobacillus brevis).